Consider the following 3187-residue polypeptide: Cilia- and flagella-associated protein 47 (3187 aa).

Positions 1746–1869 (SDSERILLSW…LCVYMYERLP (124 aa)) constitute a Calponin-homology (CH) domain. The segment at 2024–2052 (KLTESRQYPKHDDDMSSSGSDTDQGCSDS) is disordered. Residues 2026 to 2037 (TESRQYPKHDDD) are compositionally biased toward basic and acidic residues.

Interacts with CFAP65. Highly expressed in spermatzoa (at protein level).

The protein resides in the cytoplasm. It is found in the cytoskeleton. It localises to the flagellum basal body. Functionally, plays a role in flagellar formation and sperm motility. This chain is Cilia- and flagella-associated protein 47, found in Homo sapiens (Human).